Here is a 596-residue protein sequence, read N- to C-terminus: MTSPSPRIQIISTDSAVASPQRIQIVTDQQTGQKIQIVTAVDASGSSKQQFILTSPDGAGTGKVILASPETSSAKQLIFTTSDNLVPGRIQIVTDSASVERLLGKADVQRPQVVEYCVVCGDKASGRHYGAVSCEGCKGFFKRSVRKNLTYSCRSSQDCIINKHHRNRCQFCRLKKCLEMGMKMESVQSERKPFDVQREKPSNCAASTEKIYIRKDLRSPLIATPTFVADKDGARQTGLLDPGMLVNIQQPLIREDGTVLLAADSKAETSQGALGTLANVVTSLANLSESLNNGDASEMQPEDQSASEITRAFDTLAKALNTTDSASPPSLADGIDASGGGSIHVISRDQSTPIIEVEGPLLSDTHVTFKLTMPSPMPEYLNVHYICESASRLLFLSMHWARSIPAFQALGQDCNTSLVRACWNELFTLGLAQCAQVMSLSTILAAIVNHLQNSIQEDKLSGDRIKQVMEHIWKLQEFCNSMAKLDIDGYEYAYLKAIVLFSPDHPGLTGTSQIEKFQEKAQMELQDYVQKTYSEDTYRLARILVRLPALRLMSSNITEELFFTGLIGNVSIDSIIPYILKMETAEYNGQITGASL.

S19 is subject to Phosphoserine; by MAPK. Residue S46 is modified to Phosphoserine. S55 and S68 each carry phosphoserine; by MAPK. At S98 the chain carries Phosphoserine. A DNA-binding region (nuclear receptor) is located at residues 114 to 189; that stretch reads VEYCVVCGDK…MGMKMESVQS (76 aa). 2 NR C4-type zinc fingers span residues 117–137 and 153–177; these read CVVC…CEGC and CRSS…LKKC. A Glycyl lysine isopeptide (Lys-Gly) (interchain with G-Cter in SUMO2) cross-link involves residue K192. S219 carries the post-translational modification Phosphoserine. Position 231 is an N6-acetyllysine (K231). Residues 341–583 form the NR LBD domain; the sequence is GSIHVISRDQ…SIIPYILKME (243 aa).

Belongs to the nuclear hormone receptor family. NR2 subfamily. As to quaternary structure, homodimer; can bind DNA as homodimer. Heterodimer; binds DNA as a heterodimer with NR2C1 required for chromatin remodeling and for binding to promoter regions such as globin DR1 repeats. Interacts with NR2C2AP; the interaction represses selective NR2C2-mediated transcriptional activity. Interacts with PCAF; the interaction preferentially occurs on the non-phosphorylated form and induces NR2C2-mediated transactivation activity and does not require the ligand-binding domain. Interacts (MAPK-mediated phosphorylated form) with NRIP1; the interaction promotes repression of NR2C2-mediated activity. Interacts with NLRP10. Interacts (via ligand-binding region) with transcriptional corepressor JAZF1; the interaction promotes NR2C2-mediated transcriptional repression. Phosphorylation on Ser-19 and Ser-68 is an important regulator of NR2C2-mediated transcriptional activity. Phosphorylation on these residues recruits the corepressor, NRIP1, leading to transcripional repression, whereas the non-phosphorylated form preferentially recruits the coactivator, PCAF. As to expression, expressed, during embryogenesis, in perichondrium, developing glomeruli structures and tubules of kidney, as well as in intestiinal villi. Also expressed in lung and hair follicles.

Its subcellular location is the nucleus. Functionally, orphan nuclear receptor that can act as a repressor or activator of transcription. An important repressor of nuclear receptor signaling pathways such as retinoic acid receptor, retinoid X, vitamin D3 receptor, thyroid hormone receptor and estrogen receptor pathways. May regulate gene expression during the late phase of spermatogenesis. Activates transcriptional activity of LHCG and is antagonist of PPARA-mediated transactivation. Together with NR2C1, forms the core of the DRED (direct repeat erythroid-definitive) complex that represses embryonic and fetal globin transcription including that of GATA1. Binds to hormone response elements (HREs) consisting of two 5'-AGGTCA-3' half site direct repeat consensus sequences. Plays a fundamental role in early embryonic development and embryonic stem cells. Required for normal spermatogenesis and cerebellum development. Appears to be important for neurodevelopmentally regulated behavior. The protein is Nuclear receptor subfamily 2 group C member 2 (Nr2c2) of Mus musculus (Mouse).